A 129-amino-acid chain; its full sequence is MFAVIKTGGKQYRVAANDLIKVEKVAGEAGDIVEFAEVLMVGSTIGAPTVAGAIVTAEVVEQGRARKVIAFKKRRRQNSKRTRGHRQELTTIRISEILTDGAKPSKKAAEKKAPKAAPKKAAAKAESAE.

Residues 100 to 129 (DGAKPSKKAAEKKAPKAAPKKAAAKAESAE) are disordered.

The protein belongs to the bacterial ribosomal protein bL21 family. In terms of assembly, part of the 50S ribosomal subunit. Contacts protein L20.

In terms of biological role, this protein binds to 23S rRNA in the presence of protein L20. The chain is Large ribosomal subunit protein bL21 from Brucella anthropi (strain ATCC 49188 / DSM 6882 / CCUG 24695 / JCM 21032 / LMG 3331 / NBRC 15819 / NCTC 12168 / Alc 37) (Ochrobactrum anthropi).